Here is a 448-residue protein sequence, read N- to C-terminus: MSQSTATYINVIGAGLAGSEAAYQIAKRGIPVKLYEMRGVKATPQHKTTNFAELVCSNSFRGDSLTNAVGLLKEEMRRLDSIIMRNGEANRVPAGGAMAVDREGYAESVTAELENHPLIEVIRDEITEIPDDAITVIATGPLTSDALAEKIHALNGGDGFYFYDAAAPIIDKSTIDMSKVYLKSRYDKGEAAYLNCPMTKEEFMAFHEALTTAEEAPLNSFEKEKYFEGCMPIEVMAKRGIKTMLYGPMKPVGLEYPDDYTGPRDGEFKTPYAVVQLRQDNTAGSLYNIVGFQTHLKWGEQKRVFQMIPGLENAEFVRYGVMHRNSYMDSPNLLTETFQSRRNPNLFFAGQMTGVEGYVESAASGLVAGINAARLFKREEALIFPQTTAIGSLPHYVTHADSKHFQPMNVNFGIIKELEGLRIRDKKERYEAIASRALADLDTCLASL.

13–18 (GAGLAG) provides a ligand contact to FAD.

This sequence belongs to the MnmG family. TrmFO subfamily. FAD serves as cofactor.

It localises to the cytoplasm. The enzyme catalyses uridine(54) in tRNA + (6R)-5,10-methylene-5,6,7,8-tetrahydrofolate + NADH + H(+) = 5-methyluridine(54) in tRNA + (6S)-5,6,7,8-tetrahydrofolate + NAD(+). The catalysed reaction is uridine(54) in tRNA + (6R)-5,10-methylene-5,6,7,8-tetrahydrofolate + NADPH + H(+) = 5-methyluridine(54) in tRNA + (6S)-5,6,7,8-tetrahydrofolate + NADP(+). Catalyzes the folate-dependent formation of 5-methyl-uridine at position 54 (M-5-U54) in all tRNAs. In Streptococcus pyogenes serotype M2 (strain MGAS10270), this protein is Methylenetetrahydrofolate--tRNA-(uracil-5-)-methyltransferase TrmFO.